Consider the following 81-residue polypeptide: Cytotoxin 1a (81 aa).

The N-terminal stretch at 1-21 (MKTLLLTLVVVTIVCLDLGYT) is a signal peptide. 4 cysteine pairs are disulfide-bonded: Cys24/Cys42, Cys35/Cys59, Cys63/Cys74, and Cys75/Cys80.

This sequence belongs to the three-finger toxin family. Short-chain subfamily. Type IA cytotoxin sub-subfamily. As to quaternary structure, monomer in solution; Homodimer and oligomer in the presence of negatively charged lipids forming a pore with a size ranging between 20 and 30 Angstroms. In terms of tissue distribution, expressed by the venom gland.

It is found in the secreted. Its subcellular location is the target cell membrane. Its function is as follows. Shows cytolytic activity on many different cells by forming pore in lipid membranes. In vivo, increases heart rate or kills the animal by cardiac arrest. In addition, it binds to heparin with high affinity, interacts with Kv channel-interacting protein 1 (KCNIP1) in a calcium-independent manner, and binds to integrin alpha-V/beta-3 (ITGAV/ITGB3) with moderate affinity. The polypeptide is Cytotoxin 1a (Naja atra (Chinese cobra)).